A 487-amino-acid polypeptide reads, in one-letter code: DNA ligase (487 aa).

The active-site N6-AMP-lysine intermediate is the Lys159. ATP-binding residues include Arg164, Arg182, and Glu217. Glu217 contributes to the a divalent metal cation binding site. Positions 229–237 (EGLDFLFDA) are interaction with the sliding clamp. Glu344 provides a ligand contact to a divalent metal cation. Residues Arg359 and Lys365 each coordinate ATP.

The protein belongs to the ATP-dependent DNA ligase family. In terms of assembly, interacts with the sliding clamp. A divalent metal cation serves as cofactor.

The enzyme catalyses ATP + (deoxyribonucleotide)n-3'-hydroxyl + 5'-phospho-(deoxyribonucleotide)m = (deoxyribonucleotide)n+m + AMP + diphosphate.. DNA ligase, which is expressed in the early stage of lytic development, has been implicated in T4 DNA synthesis and genetic recombination. It may also play a role in T4 DNA repair. The chain is DNA ligase (30) from Enterobacteria phage T4 (Bacteriophage T4).